The sequence spans 378 residues: Erythronate-4-phosphate dehydrogenase (378 aa).

Residues Ser45 and Thr66 each contribute to the substrate site. Positions 146 and 175 each coordinate NAD(+). The active site involves Arg208. NAD(+) is bound at residue Asp232. Glu237 is an active-site residue. His254 (proton donor) is an active-site residue. Gly257 provides a ligand contact to NAD(+). Tyr258 serves as a coordination point for substrate.

It belongs to the D-isomer specific 2-hydroxyacid dehydrogenase family. PdxB subfamily. Homodimer.

The protein localises to the cytoplasm. The enzyme catalyses 4-phospho-D-erythronate + NAD(+) = (R)-3-hydroxy-2-oxo-4-phosphooxybutanoate + NADH + H(+). It participates in cofactor biosynthesis; pyridoxine 5'-phosphate biosynthesis; pyridoxine 5'-phosphate from D-erythrose 4-phosphate: step 2/5. In terms of biological role, catalyzes the oxidation of erythronate-4-phosphate to 3-hydroxy-2-oxo-4-phosphonooxybutanoate. This Escherichia coli O17:K52:H18 (strain UMN026 / ExPEC) protein is Erythronate-4-phosphate dehydrogenase.